The primary structure comprises 416 residues: Gamma-glutamyl phosphate reductase (416 aa).

The protein belongs to the gamma-glutamyl phosphate reductase family.

It localises to the cytoplasm. It catalyses the reaction L-glutamate 5-semialdehyde + phosphate + NADP(+) = L-glutamyl 5-phosphate + NADPH + H(+). It functions in the pathway amino-acid biosynthesis; L-proline biosynthesis; L-glutamate 5-semialdehyde from L-glutamate: step 2/2. In terms of biological role, catalyzes the NADPH-dependent reduction of L-glutamate 5-phosphate into L-glutamate 5-semialdehyde and phosphate. The product spontaneously undergoes cyclization to form 1-pyrroline-5-carboxylate. This Salmonella newport (strain SL254) protein is Gamma-glutamyl phosphate reductase.